We begin with the raw amino-acid sequence, 327 residues long: Olfactory receptor 6A2 (327 aa).

The Extracellular segment spans residues Met-1–Val-26. A glycan (N-linked (GlcNAc...) asparagine) is linked at Asn-5. A helical membrane pass occupies residues Leu-27–Ile-47. The Cytoplasmic segment spans residues Met-48–Thr-55. Residues Leu-56–Thr-76 form a helical membrane-spanning segment. At Val-77–Thr-104 the chain is on the extracellular side. A disulfide bond links Cys-102 and Cys-194. The helical transmembrane segment at Gln-105–Tyr-125 threads the bilayer. At Asp-126 to Arg-144 the chain is on the cytoplasmic side. A helical transmembrane segment spans residues Leu-145–Val-165. The Extracellular portion of the chain corresponds to Phe-166–Glu-201. The N-linked (GlcNAc...) asparagine glycan is linked to Asn-191. Residues Leu-202–Ser-222 form a helical membrane-spanning segment. Topologically, residues Tyr-223–Ala-242 are cytoplasmic. A helical membrane pass occupies residues Phe-243–Ile-263. Over Tyr-264–Asn-276 the chain is Extracellular. Residues Lys-277–Leu-297 form a helical membrane-spanning segment. Topologically, residues Arg-298–Val-327 are cytoplasmic.

It belongs to the G-protein coupled receptor 1 family.

Its subcellular location is the cell membrane. Its function is as follows. Odorant receptor. This is Olfactory receptor 6A2 (OR6A2) from Homo sapiens (Human).